Here is a 331-residue protein sequence, read N- to C-terminus: Aspartate carbamoyltransferase catalytic subunit (331 aa).

The carbamoyl phosphate site is built by arginine 76 and threonine 77. Lysine 104 is a binding site for L-aspartate. 3 residues coordinate carbamoyl phosphate: arginine 126, histidine 154, and glutamine 157. 2 residues coordinate L-aspartate: arginine 187 and arginine 246. Residues glycine 287 and proline 288 each coordinate carbamoyl phosphate.

The protein belongs to the aspartate/ornithine carbamoyltransferase superfamily. ATCase family. Heterododecamer (2C3:3R2) of six catalytic PyrB chains organized as two trimers (C3), and six regulatory PyrI chains organized as three dimers (R2).

The enzyme catalyses carbamoyl phosphate + L-aspartate = N-carbamoyl-L-aspartate + phosphate + H(+). It functions in the pathway pyrimidine metabolism; UMP biosynthesis via de novo pathway; (S)-dihydroorotate from bicarbonate: step 2/3. Its function is as follows. Catalyzes the condensation of carbamoyl phosphate and aspartate to form carbamoyl aspartate and inorganic phosphate, the committed step in the de novo pyrimidine nucleotide biosynthesis pathway. The chain is Aspartate carbamoyltransferase catalytic subunit from Dehalococcoides mccartyi (strain CBDB1).